A 148-amino-acid polypeptide reads, in one-letter code: 3-dehydroquinate dehydratase (148 aa).

Tyr-23 acts as the Proton acceptor in catalysis. 3 residues coordinate substrate: Asn-74, His-80, and Asp-87. His-100 serves as the catalytic Proton donor. Substrate-binding positions include 101–102 (IS) and Arg-111.

It belongs to the type-II 3-dehydroquinase family. In terms of assembly, homododecamer.

It catalyses the reaction 3-dehydroquinate = 3-dehydroshikimate + H2O. Its pathway is metabolic intermediate biosynthesis; chorismate biosynthesis; chorismate from D-erythrose 4-phosphate and phosphoenolpyruvate: step 3/7. Functionally, catalyzes a trans-dehydration via an enolate intermediate. In Anoxybacillus flavithermus (strain DSM 21510 / WK1), this protein is 3-dehydroquinate dehydratase.